Here is a 689-residue protein sequence, read N- to C-terminus: Choline transporter-like 1 (689 aa).

Residues 23–43 traverse the membrane as a helical segment; it reads IFWLVVYILFWIALLVIAVFS. N-linked (GlcNAc...) asparagine glycosylation occurs at Asn-134. The next 2 helical transmembrane spans lie at 199–219 and 233–255; these read FSDI…SLIF and IISW…VLWW. Asn-279 carries N-linked (GlcNAc...) asparagine glycosylation. The next 2 membrane-spanning stretches (helical) occupy residues 283 to 303 and 333 to 353; these read IYVL…VIYY and VLAF…IVCL. N-linked (GlcNAc...) asparagine glycosylation is found at Asn-375 and Asn-389. Transmembrane regions (helical) follow at residues 412–432, 461–481, 562–582, and 591–611; these read IYII…QLVI, LGSV…RLIL, LVLF…SILM, and FYMA…HIVL.

It belongs to the CTL (choline transporter-like) family.

Its subcellular location is the membrane. This chain is Choline transporter-like 1, found in Aedes aegypti (Yellowfever mosquito).